Consider the following 163-residue polypeptide: MMIRIGFGYDVHPLVEGRKLIIGGVEIPFTKGLLGHSDADVLYHAIADAFLGSLALGDIGQLFPDNDERYRGIDSGLLLQEVYRRVRERGYCLNNLDAVIVAQKPKLLPFIQKMRENLAVLLNTAIENISVKATTTEGLGFAGREEGIAAYAVITVKEVLENG.

A divalent metal cation-binding residues include D10 and H12. 4-CDP-2-C-methyl-D-erythritol 2-phosphate is bound by residues 10–12 (DVH) and 36–37 (HS). Position 44 (H44) interacts with a divalent metal cation. 4-CDP-2-C-methyl-D-erythritol 2-phosphate-binding positions include 58-60 (DIG), 63-67 (FPDND), 134-137 (TTTE), F141, and R144.

The protein belongs to the IspF family. Homotrimer. It depends on a divalent metal cation as a cofactor.

It catalyses the reaction 4-CDP-2-C-methyl-D-erythritol 2-phosphate = 2-C-methyl-D-erythritol 2,4-cyclic diphosphate + CMP. Its pathway is isoprenoid biosynthesis; isopentenyl diphosphate biosynthesis via DXP pathway; isopentenyl diphosphate from 1-deoxy-D-xylulose 5-phosphate: step 4/6. Involved in the biosynthesis of isopentenyl diphosphate (IPP) and dimethylallyl diphosphate (DMAPP), two major building blocks of isoprenoid compounds. Catalyzes the conversion of 4-diphosphocytidyl-2-C-methyl-D-erythritol 2-phosphate (CDP-ME2P) to 2-C-methyl-D-erythritol 2,4-cyclodiphosphate (ME-CPP) with a corresponding release of cytidine 5-monophosphate (CMP). This is 2-C-methyl-D-erythritol 2,4-cyclodiphosphate synthase from Carboxydothermus hydrogenoformans (strain ATCC BAA-161 / DSM 6008 / Z-2901).